A 264-amino-acid chain; its full sequence is S-adenosylmethionine decarboxylase proenzyme (264 aa).

The active-site Schiff-base intermediate with substrate; via pyruvic acid is the serine 111. Serine 111 bears the Pyruvic acid (Ser); by autocatalysis mark. Histidine 116 acts as the Proton acceptor; for processing activity in catalysis. Cysteine 139 (proton donor; for catalytic activity) is an active-site residue.

Belongs to the prokaryotic AdoMetDC family. Type 2 subfamily. As to quaternary structure, heterooctamer of four alpha and four beta chains arranged as a tetramer of alpha/beta heterodimers. Pyruvate is required as a cofactor. Is synthesized initially as an inactive proenzyme. Formation of the active enzyme involves a self-maturation process in which the active site pyruvoyl group is generated from an internal serine residue via an autocatalytic post-translational modification. Two non-identical subunits are generated from the proenzyme in this reaction, and the pyruvate is formed at the N-terminus of the alpha chain, which is derived from the carboxyl end of the proenzyme. The post-translation cleavage follows an unusual pathway, termed non-hydrolytic serinolysis, in which the side chain hydroxyl group of the serine supplies its oxygen atom to form the C-terminus of the beta chain, while the remainder of the serine residue undergoes an oxidative deamination to produce ammonia and the pyruvoyl group blocking the N-terminus of the alpha chain.

The catalysed reaction is S-adenosyl-L-methionine + H(+) = S-adenosyl 3-(methylsulfanyl)propylamine + CO2. The protein operates within amine and polyamine biosynthesis; S-adenosylmethioninamine biosynthesis; S-adenosylmethioninamine from S-adenosyl-L-methionine: step 1/1. Catalyzes the decarboxylation of S-adenosylmethionine to S-adenosylmethioninamine (dcAdoMet), the propylamine donor required for the synthesis of the polyamines spermine and spermidine from the diamine putrescine. This Geobacillus thermodenitrificans (strain NG80-2) protein is S-adenosylmethionine decarboxylase proenzyme.